The chain runs to 228 residues: Cytidylate kinase (228 aa).

12 to 20 (GPASAGKST) is a binding site for ATP.

It belongs to the cytidylate kinase family. Type 1 subfamily.

It localises to the cytoplasm. It catalyses the reaction CMP + ATP = CDP + ADP. It carries out the reaction dCMP + ATP = dCDP + ADP. This Lactiplantibacillus plantarum (strain ATCC BAA-793 / NCIMB 8826 / WCFS1) (Lactobacillus plantarum) protein is Cytidylate kinase.